Here is a 212-residue protein sequence, read N- to C-terminus: Interleukin-6 (212 aa).

The N-terminal stretch at 1–29 is a signal peptide; it reads MNSFSTSAFGPVAFSLGLLLVLPAAFPAP. Cystine bridges form between C72-C78 and C101-C111. N-linked (GlcNAc...) asparagine glycosylation is present at N73. Residue N172 is glycosylated (N-linked (GlcNAc...) asparagine).

This sequence belongs to the IL-6 superfamily. Component of a hexamer of two molecules each of IL6, IL6R and IL6ST; first binds to IL6R to associate with the signaling subunit IL6ST. Interacts with IL6R (via the N-terminal ectodomain); this interaction may be affected by IL6R-binding with SORL1, hence decreasing IL6 cis signaling. Interacts with SORL1 (via the N-terminal ectodomain); this interaction leads to IL6 internalization and lysosomal degradation. May form a trimeric complex with the soluble SORL1 ectodomain and soluble IL6R receptor; this interaction might stabilize circulating IL6, hence promoting IL6 trans signaling.

It is found in the secreted. Functionally, cytokine with a wide variety of biological functions in immunity, tissue regeneration, and metabolism. Binds to IL6R, then the complex associates to the signaling subunit IL6ST/gp130 to trigger the intracellular IL6-signaling pathway. The interaction with the membrane-bound IL6R and IL6ST stimulates 'classic signaling', whereas the binding of IL6 and soluble IL6R to IL6ST stimulates 'trans-signaling'. Alternatively, 'cluster signaling' occurs when membrane-bound IL6:IL6R complexes on transmitter cells activate IL6ST receptors on neighboring receiver cells. In terms of biological role, IL6 is a potent inducer of the acute phase response. Rapid production of IL6 contributes to host defense during infection and tissue injury, but excessive IL6 synthesis is involved in disease pathology. In the innate immune response, is synthesized by myeloid cells, such as macrophages and dendritic cells, upon recognition of pathogens through toll-like receptors (TLRs) at the site of infection or tissue injury. In the adaptive immune response, is required for the differentiation of B cells into immunoglobulin-secreting cells. Plays a major role in the differentiation of CD4(+) T cell subsets. Essential factor for the development of T follicular helper (Tfh) cells that are required for the induction of germinal-center formation. Required to drive naive CD4(+) T cells to the Th17 lineage. Also required for proliferation of myeloma cells and the survival of plasmablast cells. Its function is as follows. Acts as an essential factor in bone homeostasis and on vessels directly or indirectly by induction of VEGF, resulting in increased angiogenesis activity and vascular permeability. Induces, through 'trans-signaling' and synergistically with IL1B and TNF, the production of VEGF. Involved in metabolic controls, is discharged into the bloodstream after muscle contraction increasing lipolysis and improving insulin resistance. 'Trans-signaling' in central nervous system also regulates energy and glucose homeostasis. Mediates, through GLP-1, crosstalk between insulin-sensitive tissues, intestinal L cells and pancreatic islets to adapt to changes in insulin demand. Also acts as a myokine. Plays a protective role during liver injury, being required for maintenance of tissue regeneration. Also has a pivotal role in iron metabolism by regulating HAMP/hepcidin expression upon inflammation or bacterial infection. Through activation of IL6ST-YAP-NOTCH pathway, induces inflammation-induced epithelial regeneration. The sequence is that of Interleukin-6 (IL6) from Cercocebus atys (Sooty mangabey).